Consider the following 251-residue polypeptide: Probable phosphatase Sputcn32_1369 (251 aa).

Residues His8, His10, His16, His41, Glu74, His102, His132, Asp193, and His195 each contribute to the Zn(2+) site.

It belongs to the PHP family. Requires Zn(2+) as cofactor.

This Shewanella putrefaciens (strain CN-32 / ATCC BAA-453) protein is Probable phosphatase Sputcn32_1369.